The sequence spans 234 residues: MKITWLGHSAFRIETSKAKILLDPFLSYNASFSGQDIKDVSAGITHILLTHGHGDHVGDTVALAKETGAVVLANADLAAWLGSKGVDKIEMGNTGGTIALGSFSATFTNALHSSAQITEDGVSHALGNANGLMLHFDDEASILAMGDTDIFSDMALINELHQPDIGFVPVGDRFTMGGAVAALACRRYFNFKTAIPCHYGTFPIIDQTAEKFVAGMDGSKTDVKAIRPSESLSI.

Belongs to the UPF0173 family.

This Rhizobium johnstonii (strain DSM 114642 / LMG 32736 / 3841) (Rhizobium leguminosarum bv. viciae) protein is UPF0173 metal-dependent hydrolase RL2074.